The chain runs to 47 residues: Large ribosomal subunit protein bL32c (47 aa).

Belongs to the bacterial ribosomal protein bL32 family.

The protein resides in the plastid. In Prototheca wickerhamii, this protein is Large ribosomal subunit protein bL32c (rpl32).